Here is a 90-residue protein sequence, read N- to C-terminus: Probable Fe(2+)-trafficking protein (90 aa).

This sequence belongs to the Fe(2+)-trafficking protein family. As to quaternary structure, monomer.

Could be a mediator in iron transactions between iron acquisition and iron-requiring processes, such as synthesis and/or repair of Fe-S clusters in biosynthetic enzymes. The sequence is that of Probable Fe(2+)-trafficking protein from Hamiltonella defensa subsp. Acyrthosiphon pisum (strain 5AT).